We begin with the raw amino-acid sequence, 204 residues long: Methylthioribulose-1-phosphate dehydratase (204 aa).

Zn(2+) is bound by residues His94 and His96.

The protein belongs to the aldolase class II family. MtnB subfamily. Zn(2+) serves as cofactor.

It catalyses the reaction 5-(methylsulfanyl)-D-ribulose 1-phosphate = 5-methylsulfanyl-2,3-dioxopentyl phosphate + H2O. It participates in amino-acid biosynthesis; L-methionine biosynthesis via salvage pathway; L-methionine from S-methyl-5-thio-alpha-D-ribose 1-phosphate: step 2/6. Catalyzes the dehydration of methylthioribulose-1-phosphate (MTRu-1-P) into 2,3-diketo-5-methylthiopentyl-1-phosphate (DK-MTP-1-P). This chain is Methylthioribulose-1-phosphate dehydratase, found in Serratia proteamaculans (strain 568).